The sequence spans 235 residues: Ribosome maturation factor RimM (235 aa).

Basic and acidic residues predominate over residues 1–19 (MKHEEANKEIGGRGAEGQR). Residues 1-49 (MKHEEANKEIGGRGAEGQRSKRVGGNSKIQNIQSPAPNPQPIVPNTQSP) form a disordered region. Residues 150-230 (EDEYHVLDLI…RIEITPPPGL (81 aa)) form the PRC barrel domain.

It belongs to the RimM family. As to quaternary structure, binds ribosomal protein uS19.

The protein resides in the cytoplasm. An accessory protein needed during the final step in the assembly of 30S ribosomal subunit, possibly for assembly of the head region. Essential for efficient processing of 16S rRNA. May be needed both before and after RbfA during the maturation of 16S rRNA. It has affinity for free ribosomal 30S subunits but not for 70S ribosomes. The protein is Ribosome maturation factor RimM of Nostoc punctiforme (strain ATCC 29133 / PCC 73102).